The chain runs to 424 residues: 3-oxo-tetronate kinase (424 aa).

ATP is bound by residues S260, 364 to 367, and G407; that span reads GGET.

The protein belongs to the four-carbon acid sugar kinase family.

It carries out the reaction 3-dehydro-L-erythronate + ATP = 3-dehydro-4-O-phospho-L-erythronate + ADP + H(+). It catalyses the reaction 3-dehydro-D-erythronate + ATP = 3-dehydro-4-O-phospho-D-erythronate + ADP + H(+). Functionally, catalyzes the ATP-dependent phosphorylation of 3-oxo-tetronate to 3-oxo-tetronate 4-phosphate. This chain is 3-oxo-tetronate kinase, found in Pectobacterium atrosepticum (strain SCRI 1043 / ATCC BAA-672) (Erwinia carotovora subsp. atroseptica).